The sequence spans 319 residues: MMVFRVEELVTGKKNSNGSSGEFLPGEFRNGEYEAAVALEKQEDLKTLPANSVNLGEEQRKSEKVREAELKKKKLEQRSKLENLEDLEIIVQLKKRKKYKKTKVPVVKEPEPEIITEPVDVPRFLKAALENKLPVVEKFLSDKNSPDVCDEYKRTALHRACLEGHLAIVEKLMEAGAQIEFRDMLESTAIHWACRGGNLDVLKLLLNKGAKISARDKLLSTALHVAVRTGHYECAEHLIACEADLNAKDREGDTPLHDAVRLNRYKMIRLLMTFGADLNVKNCAGKTPMDLVLHWQNGTKAIFDSLKENAYKNSRIATF.

Residues 55–89 (LGEEQRKSEKVREAELKKKKLEQRSKLENLEDLEI) adopt a coiled-coil conformation. ANK repeat units lie at residues 152–181 (YKRT…QIEF), 185–214 (LEST…KISA), 218–247 (LLST…DLNA), 251–280 (EGDT…DLNV), and 284–315 (AGKT…KNSR).

As to quaternary structure, interacts with TTN/titin. Interacts with YBX1. In terms of tissue distribution, expressed in heart, cardiac muscle.

Its subcellular location is the nucleus. Its function is as follows. May play an important role in endothelial cell activation. May act as a nuclear transcription factor that negatively regulates the expression of cardiac genes. The chain is Ankyrin repeat domain-containing protein 1 (Ankrd1) from Rattus norvegicus (Rat).